Reading from the N-terminus, the 315-residue chain is Olfactory receptor 10H2 (315 aa).

The Extracellular segment spans residues 1-25; it reads MLGLNHTSMSEFILVGFSAFPHLQL. Residue asparagine 5 is glycosylated (N-linked (GlcNAc...) asparagine). Residues 26-46 form a helical membrane-spanning segment; it reads MLFLLFLLMYLFTLLGNLLIM. At 47 to 54 the chain is on the cytoplasmic side; the sequence is ATVWSERS. Residues 55–75 traverse the membrane as a helical segment; sequence LHTPMYLFLCVLSVSEILYTV. The Extracellular segment spans residues 76-99; the sequence is AIIPRMLADLLSTQRSIAFLACAS. A disulfide bond links cysteine 97 and cysteine 189. A helical transmembrane segment spans residues 100 to 120; sequence QMFFSFSFGFTHSFLLTVMGY. The Cytoplasmic segment spans residues 121-139; sequence DRYVAICHPLRYNVLMSPR. The chain crosses the membrane as a helical span at residues 140–160; that stretch reads GCACLVGCSWAGGSVMGMVVT. The Extracellular segment spans residues 161–197; sequence SAIFQLTFCGSHEIQHFLCHVPPLLKLACGNNVPAVA. Residues 198-218 form a helical membrane-spanning segment; the sequence is LGVGLVCIMALLGCFLLILLS. Residues 219-238 are Cytoplasmic-facing; sequence YAFIVADILKIPSAEGRNKA. The chain crosses the membrane as a helical span at residues 239–259; that stretch reads FSTCASHLIVVIVHYGFASVI. Residues 260 to 272 are Extracellular-facing; the sequence is YLKPKGPHSQEGD. Residues 273-293 form a helical membrane-spanning segment; sequence TLMATTYAVLTPFLSPIIFSL. Over 294–315 the chain is Cytoplasmic; sequence RNKELKVAMKRTFLSTLYSSGT.

The protein belongs to the G-protein coupled receptor 1 family.

The protein localises to the cell membrane. In terms of biological role, odorant receptor. This is Olfactory receptor 10H2 (OR10H2) from Homo sapiens (Human).